The primary structure comprises 2472 residues: Centrosomal protein of 290 kDa (2472 aa).

The segment at 1–689 (MPPNIKWKEL…MESKNAEGIF (689 aa)) is self-association (with itself or C-terminus). 3 coiled-coil regions span residues 59-747 (MKMK…LRQS), 1129-1392 (RQRI…QQSK), and 1459-1492 (QVIL…ILSR). The disordered stretch occupies residues 128-164 (DRELEDMEKELDKEKKVNEQLALRNEEAENENSKLRR). Basic and acidic residues predominate over residues 137–164 (ELDKEKKVNEQLALRNEEAENENSKLRR). The segment at 690–890 (DASLHLKAQV…TVLQVNEKSL (201 aa)) is interaction with IQCB1. Disordered regions lie at residues 1691–1713 (AHKD…SRAP) and 2451–2472 (PSPL…FPIY). Positions 1697–1713 (SLKSELQAQKEANSRAP) are enriched in polar residues. Residues 1960–2472 (TTGMTVDQVL…GESPHSFPIY (513 aa)) are self-association (with itself or N-terminus).

Part of the tectonic-like complex (also named B9 complex). Interacts with ATF4 via its N-terminal region. Associates with the BBSome complex, interacting (via N-terminus) with BBS4. Interacts with IQCB1/NPHP5; IQCB1 and CEP290/NPHP6 are proposed to form a functional NPHP5-6 module localized to the centrosome. Interacts with NPHP4; the interaction likely requires additional interactors. Interacts with ZNF423, FAM161A, CEP162, CEP162, CEP131, TALPID3, CCDC13, CC2D2A, RPGRIP1. Can self-associate (homo- or heteromeric). Interacts with CCP110; required for suppressing cilia formation. Interacts with RPGR. Associates (via C-terminus) with microtubules; association to microtubule is reduced in response to cellular stress, such as ultraviolet light (UV) radiation or heat shock, in a process that requires p38 MAP kinase signaling. Interacts with FAM161A. Interacts with PCM1. Interacts with CCDC66. Interacts with ARMC9 and CSPP1. Ubiquitinated. May undergo monoubiquitination; monoubiquitination is inhibited in response to cellular stress, such as ultraviolet light (UV) radiation or heat shock, but does not cause its displacement from centriolar satellites. As to expression, expressed in multiple organs during early postnatal development, with highest levels in hindbrain.

The protein resides in the cytoplasm. The protein localises to the cytoskeleton. It is found in the microtubule organizing center. It localises to the centrosome. Its subcellular location is the centriolar satellite. The protein resides in the nucleus. The protein localises to the centriole. It is found in the cell projection. It localises to the cilium. Its subcellular location is the cilium basal body. The protein resides in the cytoplasmic vesicle. Involved in early and late steps in cilia formation. Its association with CCP110 is required for inhibition of primary cilia formation by CCP110. May play a role in early ciliogenesis in the disappearance of centriolar satellites and in the transition of primary ciliar vesicles (PCVs) to capped ciliary vesicles (CCVs). Required for the centrosomal recruitment of RAB8A and for the targeting of centriole satellite proteins to centrosomes such as of PCM1. Required for the correct localization of ciliary and phototransduction proteins in retinal photoreceptor cells; may play a role in ciliary transport processes. Required for efficient recruitment of RAB8A to primary cilium. In the ciliary transition zone is part of the tectonic-like complex (also named B9 complex) which is required for tissue-specific ciliogenesis and may regulate ciliary membrane composition. Involved in regulation of the BBSome complex integrity, specifically for presence of BBS2, BBS5 and BBS8/TTC8 in the complex, and in ciliary targeting of selected BBSome cargos. May play a role in controlling entry of the BBSome complex to cilia possibly implicating IQCB1/NPHP5. Activates ATF4-mediated transcription. The protein is Centrosomal protein of 290 kDa of Mus musculus (Mouse).